The chain runs to 193 residues: Thymidine kinase (193 aa).

ATP contacts are provided by residues 16–23 (GPMFSGKS) and 89–92 (DEIQ). Glu-90 functions as the Proton acceptor in the catalytic mechanism. 4 residues coordinate Zn(2+): Cys-146, Cys-149, Cys-184, and Cys-187.

The protein belongs to the thymidine kinase family. In terms of assembly, homotetramer.

It is found in the cytoplasm. It carries out the reaction thymidine + ATP = dTMP + ADP + H(+). This is Thymidine kinase from Caldanaerobacter subterraneus subsp. tengcongensis (strain DSM 15242 / JCM 11007 / NBRC 100824 / MB4) (Thermoanaerobacter tengcongensis).